Consider the following 160-residue polypeptide: Photosystem II extrinsic protein V (160 aa).

The first 25 residues, 1–25, serve as a signal peptide directing secretion; it reads MKRFFLVAIASVLFFFNTMVGSANA. Heme c-binding residues include Cys-62, Cys-65, His-66, and His-117.

Belongs to the cytochrome c family. PsbV subfamily. As to quaternary structure, PSII is composed of 1 copy each of membrane proteins PsbA, PsbB, PsbC, PsbD, PsbE, PsbF, PsbH, PsbI, PsbJ, PsbK, PsbL, PsbM, PsbT, PsbX, PsbY, PsbZ, Psb30/Ycf12, peripheral proteins PsbO, CyanoQ (PsbQ), PsbU, PsbV and a large number of cofactors. It forms dimeric complexes. The cyanobacterial oxygen-evolving complex is composed of PsbO, CyanoQ (PsbQ), PsbV and PsbU. Heme c serves as cofactor.

The protein resides in the cellular thylakoid membrane. Functionally, one of the extrinsic, lumenal subunits of photosystem II (PSII). PSII is a light-driven water plastoquinone oxidoreductase, using light energy to abstract electrons from H(2)O, generating a proton gradient subsequently used for ATP formation. The extrinsic proteins stabilize the structure of photosystem II oxygen-evolving complex (OEC), the ion environment of oxygen evolution and protect the OEC against heat-induced inactivation. Low-potential cytochrome c that plays a role in the OEC of PSII, required for normal function or stabilization of PSII. The chain is Photosystem II extrinsic protein V from Synechocystis sp. (strain ATCC 27184 / PCC 6803 / Kazusa).